Consider the following 230-residue polypeptide: Ion-translocating oxidoreductase complex subunit E (230 aa).

The next 6 membrane-spanning stretches (helical) occupy residues glycine 11–valine 31, leucine 39–valine 59, isoleucine 69–alanine 89, glycine 93–glycine 113, phenylalanine 132–isoleucine 152, and serine 182–leucine 202.

It belongs to the NqrDE/RnfAE family. In terms of assembly, the complex is composed of six subunits: RnfA, RnfB, RnfC, RnfD, RnfE and RnfG.

It localises to the cell inner membrane. Its function is as follows. Part of a membrane-bound complex that couples electron transfer with translocation of ions across the membrane. This is Ion-translocating oxidoreductase complex subunit E from Vibrio atlanticus (strain LGP32) (Vibrio splendidus (strain Mel32)).